Here is a 287-residue protein sequence, read N- to C-terminus: Large ribosomal subunit protein uL2 (287 aa).

Residues 221–287 form a disordered region; that stretch reads RGSVMNPCDH…SKRSRGGRDS (67 aa). Basic residues predominate over residues 258–287; the sequence is KTRKRNKPSNKFVLRKRRKTSKRSRGGRDS.

The protein belongs to the universal ribosomal protein uL2 family. In terms of assembly, part of the 50S ribosomal subunit. Forms a bridge to the 30S subunit in the 70S ribosome.

Functionally, one of the primary rRNA binding proteins. Required for association of the 30S and 50S subunits to form the 70S ribosome, for tRNA binding and peptide bond formation. It has been suggested to have peptidyltransferase activity; this is somewhat controversial. Makes several contacts with the 16S rRNA in the 70S ribosome. The sequence is that of Large ribosomal subunit protein uL2 from Synechococcus sp. (strain RCC307).